The primary structure comprises 452 residues: Probable dihydrolipoyllysine-residue succinyltransferase component of 2-oxoglutarate dehydrogenase complex, mitochondrial (452 aa).

Residues 42-117 enclose the Lipoyl-binding domain; that stretch reads STRIKTPPFP…TIDQDIAVID (76 aa). Lysine 83 is subject to N6-lipoyllysine. The disordered stretch occupies residues 119 to 225; that stretch reads SAAPPEGGSA…FSRNEDRVKM (107 aa). Basic and acidic residues-rich tracts occupy residues 130-144, 154-170, and 195-209; these read PKKD…DAAK, KPIE…EQKE, and AKSE…KATE. Residues histidine 424 and aspartate 428 contribute to the active site.

The protein belongs to the 2-oxoacid dehydrogenase family. (R)-lipoate is required as a cofactor.

It is found in the mitochondrion. The catalysed reaction is N(6)-[(R)-dihydrolipoyl]-L-lysyl-[protein] + succinyl-CoA = N(6)-[(R)-S(8)-succinyldihydrolipoyl]-L-lysyl-[protein] + CoA. The protein operates within amino-acid degradation; L-lysine degradation via saccharopine pathway; glutaryl-CoA from L-lysine: step 6/6. The 2-oxoglutarate dehydrogenase complex catalyzes the overall conversion of 2-oxoglutarate to succinyl-CoA and CO(2). It contains multiple copies of three enzymatic components: 2-oxoglutarate dehydrogenase (E1), dihydrolipoamide succinyltransferase (E2) and lipoamide dehydrogenase (E3). The sequence is that of Probable dihydrolipoyllysine-residue succinyltransferase component of 2-oxoglutarate dehydrogenase complex, mitochondrial (kgd2) from Schizosaccharomyces pombe (strain 972 / ATCC 24843) (Fission yeast).